The chain runs to 167 residues: Translation initiation factor IF-3 (167 aa).

It belongs to the IF-3 family. Monomer.

It is found in the cytoplasm. Functionally, IF-3 binds to the 30S ribosomal subunit and shifts the equilibrium between 70S ribosomes and their 50S and 30S subunits in favor of the free subunits, thus enhancing the availability of 30S subunits on which protein synthesis initiation begins. This is Translation initiation factor IF-3 from Bacillus anthracis.